The chain runs to 89 residues: Small ribosomal subunit protein uS15 (89 aa).

This sequence belongs to the universal ribosomal protein uS15 family. Part of the 30S ribosomal subunit. Forms a bridge to the 50S subunit in the 70S ribosome, contacting the 23S rRNA.

Functionally, one of the primary rRNA binding proteins, it binds directly to 16S rRNA where it helps nucleate assembly of the platform of the 30S subunit by binding and bridging several RNA helices of the 16S rRNA. In terms of biological role, forms an intersubunit bridge (bridge B4) with the 23S rRNA of the 50S subunit in the ribosome. The chain is Small ribosomal subunit protein uS15 from Mycobacterium bovis (strain ATCC BAA-935 / AF2122/97).